A 151-amino-acid chain; its full sequence is Nascent polypeptide-associated complex subunit beta (151 aa).

The NAC-A/B domain maps to 32-97 (EQDDTKLMEA…PQEKDVTQLI (66 aa)). The segment at 122-151 (GKTPSMGGENAGADEDIPDLIEGQKFDEVE) is disordered.

This sequence belongs to the NAC-beta family. As to quaternary structure, part of the nascent polypeptide-associated complex (NAC), consisting of EGD2 and EGD1. NAC associates with ribosomes via EGD1.

The protein resides in the cytoplasm. It localises to the nucleus. Functionally, component of the nascent polypeptide-associated complex (NAC), a dynamic component of the ribosomal exit tunnel, protecting the emerging polypeptides from interaction with other cytoplasmic proteins to ensure appropriate nascent protein targeting. The NAC complex also promotes mitochondrial protein import by enhancing productive ribosome interactions with the outer mitochondrial membrane and blocks the inappropriate interaction of ribosomes translating non-secretory nascent polypeptides with translocation sites in the membrane of the endoplasmic reticulum. EGD1 may act as a transcription factor that exert a negative effect on the expression of several genes that are transcribed by RNA polymerase II. In Meyerozyma guilliermondii (strain ATCC 6260 / CBS 566 / DSM 6381 / JCM 1539 / NBRC 10279 / NRRL Y-324) (Yeast), this protein is Nascent polypeptide-associated complex subunit beta (EGD1).